Here is a 270-residue protein sequence, read N- to C-terminus: Bis(5'-nucleosyl)-tetraphosphatase, symmetrical (270 aa).

Belongs to the Ap4A hydrolase family.

The catalysed reaction is P(1),P(4)-bis(5'-adenosyl) tetraphosphate + H2O = 2 ADP + 2 H(+). In terms of biological role, hydrolyzes diadenosine 5',5'''-P1,P4-tetraphosphate to yield ADP. The protein is Bis(5'-nucleosyl)-tetraphosphatase, symmetrical of Haemophilus ducreyi (strain 35000HP / ATCC 700724).